A 285-amino-acid polypeptide reads, in one-letter code: MLPATFKLCAGISYRHLRNMTGLRRTAAVALTHELEKLALVGPGPGKWINQIRRKSILLSSRLEEKTLNDVEMSYIKQGEEALKKSLNILGDQDGWKTEIVMENGDKVLSKVLPDIGKVFKLEAVVEKPLDNVYGELVDNMEKMGEWNPNVKEVKILQKIGKDTVITHEKAAETPGNIVGARDFVSVRCSKRRGSTCILAGMSTRFGGMPEQKGFVRGENGPTCMVLRPLAEDISKTKLTWLLSIDLKGWLPKSIINQVLSQTQVDFAKHLRSRMTSSSNALSLC.

The region spanning 67-280 is the START domain; sequence TLNDVEMSYI…LRSRMTSSSN (214 aa).

May interact with TSPO.

It is found in the mitochondrion. It catalyses the reaction cholesterol(in) = cholesterol(out). It participates in steroid metabolism; cholesterol metabolism. Its function is as follows. Plays a key role in steroid hormone synthesis by enhancing the metabolism of cholesterol into pregnenolone. Mediates the transfer of cholesterol from the outer mitochondrial membrane to the inner mitochondrial membrane where it is cleaved to pregnenolone. This Xenopus laevis (African clawed frog) protein is Steroidogenic acute regulatory protein (star).